The sequence spans 136 residues: Large ribosomal subunit protein uL16c (136 aa).

This sequence belongs to the universal ribosomal protein uL16 family. As to quaternary structure, part of the 50S ribosomal subunit.

It is found in the plastid. Its subcellular location is the chloroplast. This chain is Large ribosomal subunit protein uL16c, found in Citrus sinensis (Sweet orange).